Here is a 346-residue protein sequence, read N- to C-terminus: Histidinol-phosphate aminotransferase (346 aa).

Lys-209 is modified (N6-(pyridoxal phosphate)lysine).

The protein belongs to the class-II pyridoxal-phosphate-dependent aminotransferase family. Histidinol-phosphate aminotransferase subfamily. In terms of assembly, homodimer. Pyridoxal 5'-phosphate is required as a cofactor.

It catalyses the reaction L-histidinol phosphate + 2-oxoglutarate = 3-(imidazol-4-yl)-2-oxopropyl phosphate + L-glutamate. The protein operates within amino-acid biosynthesis; L-histidine biosynthesis; L-histidine from 5-phospho-alpha-D-ribose 1-diphosphate: step 7/9. The chain is Histidinol-phosphate aminotransferase from Vibrio campbellii (strain ATCC BAA-1116).